We begin with the raw amino-acid sequence, 345 residues long: Flotillin-like protein FloA 1 (345 aa).

The chain crosses the membrane as a helical span at residues L26–F46.

It belongs to the flotillin-like FloA family. As to quaternary structure, homooligomerizes.

It localises to the cell membrane. It is found in the membrane raft. Functionally, found in functional membrane microdomains (FMM) that may be equivalent to eukaryotic membrane rafts. FMMs are highly dynamic and increase in number as cells age. Flotillins are thought to be important factors in membrane fluidity. This chain is Flotillin-like protein FloA 1, found in Rhodopirellula baltica (strain DSM 10527 / NCIMB 13988 / SH1).